A 269-amino-acid polypeptide reads, in one-letter code: Dynein regulatory complex protein 8 (269 aa).

A disordered region spans residues methionine 1–serine 113. Residues alanine 54–alanine 76 show a composition bias toward low complexity. EF-hand domains lie at glutamate 150–cysteine 185 and isoleucine 228–valine 263.

The protein belongs to the DRC8 family. As to quaternary structure, component of the nexin-dynein regulatory complex (N-DRC).

Its subcellular location is the cytoplasm. The protein localises to the cytoskeleton. It is found in the flagellum axoneme. Functionally, component of the nexin-dynein regulatory complex (N-DRC), a key regulator of ciliary/flagellar motility which maintains the alignment and integrity of the distal axoneme and regulates microtubule sliding in motile axonemes. The sequence is that of Dynein regulatory complex protein 8 (EFCAB2) from Homo sapiens (Human).